The sequence spans 537 residues: Hydroxylamine reductase (537 aa).

Cysteine 3, cysteine 6, cysteine 15, and cysteine 21 together coordinate [4Fe-4S] cluster. Histidine 239, glutamate 263, cysteine 307, cysteine 393, cysteine 421, cysteine 446, glutamate 480, and lysine 482 together coordinate hybrid [4Fe-2O-2S] cluster. Cysteine 393 bears the Cysteine persulfide mark.

The protein belongs to the HCP family. [4Fe-4S] cluster is required as a cofactor. Hybrid [4Fe-2O-2S] cluster serves as cofactor.

The protein localises to the cytoplasm. The catalysed reaction is A + NH4(+) + H2O = hydroxylamine + AH2 + H(+). Catalyzes the reduction of hydroxylamine to form NH(3) and H(2)O. In Lawsonia intracellularis (strain PHE/MN1-00), this protein is Hydroxylamine reductase.